The following is a 455-amino-acid chain: Ribulose bisphosphate carboxylase large chain (455 aa).

Lysine 5 carries the post-translational modification N6,N6,N6-trimethyllysine. Residues asparagine 114 and threonine 164 each contribute to the substrate site. Lysine 166 acts as the Proton acceptor in catalysis. Position 168 (lysine 168) interacts with substrate. Mg(2+) is bound by residues lysine 192, aspartate 194, and glutamate 195. The residue at position 192 (lysine 192) is an N6-carboxylysine. Histidine 285 functions as the Proton acceptor in the catalytic mechanism. Residues arginine 286, histidine 318, and serine 370 each coordinate substrate.

The protein belongs to the RuBisCO large chain family. Type I subfamily. As to quaternary structure, heterohexadecamer of 8 large chains and 8 small chains; disulfide-linked. The disulfide link is formed within the large subunit homodimers. Requires Mg(2+) as cofactor. In terms of processing, the disulfide bond which can form in the large chain dimeric partners within the hexadecamer appears to be associated with oxidative stress and protein turnover.

The protein localises to the plastid. It localises to the chloroplast. It carries out the reaction 2 (2R)-3-phosphoglycerate + 2 H(+) = D-ribulose 1,5-bisphosphate + CO2 + H2O. It catalyses the reaction D-ribulose 1,5-bisphosphate + O2 = 2-phosphoglycolate + (2R)-3-phosphoglycerate + 2 H(+). In terms of biological role, ruBisCO catalyzes two reactions: the carboxylation of D-ribulose 1,5-bisphosphate, the primary event in carbon dioxide fixation, as well as the oxidative fragmentation of the pentose substrate in the photorespiration process. Both reactions occur simultaneously and in competition at the same active site. In Lupinus microcarpus var. densiflorus (Whitewhorl lupine), this protein is Ribulose bisphosphate carboxylase large chain.